Consider the following 304-residue polypeptide: Large ribosomal subunit protein uL18 (304 aa).

The segment at 285 to 304 (LNALNSSAGADDDDEEEDDE) is disordered. Residues 294–304 (ADDDDEEEDDE) are compositionally biased toward acidic residues.

It belongs to the universal ribosomal protein uL18 family. In terms of assembly, component of the large ribosomal subunit (LSU).

Its subcellular location is the cytoplasm. It is found in the nucleus. Functionally, component of the ribosome, a large ribonucleoprotein complex responsible for the synthesis of proteins in the cell. The small ribosomal subunit (SSU) binds messenger RNAs (mRNAs) and translates the encoded message by selecting cognate aminoacyl-transfer RNA (tRNA) molecules. The large subunit (LSU) contains the ribosomal catalytic site termed the peptidyl transferase center (PTC), which catalyzes the formation of peptide bonds, thereby polymerizing the amino acids delivered by tRNAs into a polypeptide chain. The nascent polypeptides leave the ribosome through a tunnel in the LSU and interact with protein factors that function in enzymatic processing, targeting, and the membrane insertion of nascent chains at the exit of the ribosomal tunnel. This Oryza sativa subsp. indica (Rice) protein is Large ribosomal subunit protein uL18 (RPL5A).